Here is a 654-residue protein sequence, read N- to C-terminus: tRNA 5-methylaminomethyl-2-thiouridine biosynthesis bifunctional protein MnmC (654 aa).

A tRNA (mnm(5)s(2)U34)-methyltransferase region spans residues 1 to 235 (MSDFQHAQLD…KREMLGGTYQ (235 aa)). Residues 261-654 (VGGGLAGCAS…LRDLVRGQRG (394 aa)) are FAD-dependent cmnm(5)s(2)U34 oxidoreductase.

In the N-terminal section; belongs to the methyltransferase superfamily. tRNA (mnm(5)s(2)U34)-methyltransferase family. The protein in the C-terminal section; belongs to the DAO family. Requires FAD as cofactor.

It is found in the cytoplasm. The catalysed reaction is 5-aminomethyl-2-thiouridine(34) in tRNA + S-adenosyl-L-methionine = 5-methylaminomethyl-2-thiouridine(34) in tRNA + S-adenosyl-L-homocysteine + H(+). Catalyzes the last two steps in the biosynthesis of 5-methylaminomethyl-2-thiouridine (mnm(5)s(2)U) at the wobble position (U34) in tRNA. Catalyzes the FAD-dependent demodification of cmnm(5)s(2)U34 to nm(5)s(2)U34, followed by the transfer of a methyl group from S-adenosyl-L-methionine to nm(5)s(2)U34, to form mnm(5)s(2)U34. This chain is tRNA 5-methylaminomethyl-2-thiouridine biosynthesis bifunctional protein MnmC, found in Pseudomonas paraeruginosa (strain DSM 24068 / PA7) (Pseudomonas aeruginosa (strain PA7)).